A 513-amino-acid polypeptide reads, in one-letter code: QWRF motif-containing protein 9 (513 aa).

3 stretches are compositionally biased toward polar residues: residues 1-26 (MTAATISPSFNANVKQNKPPSFPSES), 43-55 (GTSSFFHQSSPKR), and 65-78 (VTPSSVATNRPQST). 3 disordered regions span residues 1 to 89 (MTAA…RREV), 115 to 144 (GTLERRKTTSSATISKSGGGKQEKLKLSDQ), and 184 to 293 (VSNR…LRVR). Over residues 79–89 (PRRESLDRREV) the composition is skewed to basic and acidic residues. 2 stretches are compositionally biased toward polar residues: residues 202-211 (ESVSSGSSNG) and 244-262 (VDSSVLSPKEANSLSSPRG). Positions 334–337 (QWQF) match the QWRF motif motif.

This sequence belongs to the QWRF family.

The chain is QWRF motif-containing protein 9 (QWRF9) from Arabidopsis thaliana (Mouse-ear cress).